The primary structure comprises 443 residues: Glutamyl-tRNA reductase (443 aa).

Substrate-binding positions include 49–52 (TCNR), serine 109, 114–116 (EQQ), and glutamine 120. Cysteine 50 functions as the Nucleophile in the catalytic mechanism. 189 to 194 (GAGSMG) lines the NADP(+) pocket.

It belongs to the glutamyl-tRNA reductase family. In terms of assembly, homodimer.

It carries out the reaction (S)-4-amino-5-oxopentanoate + tRNA(Glu) + NADP(+) = L-glutamyl-tRNA(Glu) + NADPH + H(+). The protein operates within porphyrin-containing compound metabolism; protoporphyrin-IX biosynthesis; 5-aminolevulinate from L-glutamyl-tRNA(Glu): step 1/2. Catalyzes the NADPH-dependent reduction of glutamyl-tRNA(Glu) to glutamate 1-semialdehyde (GSA). The sequence is that of Glutamyl-tRNA reductase from Mycobacteroides abscessus (strain ATCC 19977 / DSM 44196 / CCUG 20993 / CIP 104536 / JCM 13569 / NCTC 13031 / TMC 1543 / L948) (Mycobacterium abscessus).